A 179-amino-acid polypeptide reads, in one-letter code: Large ribosomal subunit protein uL5 (179 aa).

This sequence belongs to the universal ribosomal protein uL5 family. In terms of assembly, part of the 50S ribosomal subunit; part of the 5S rRNA/L5/L18/L25 subcomplex. Contacts the 5S rRNA and the P site tRNA. Forms a bridge to the 30S subunit in the 70S ribosome.

This is one of the proteins that bind and probably mediate the attachment of the 5S RNA into the large ribosomal subunit, where it forms part of the central protuberance. In the 70S ribosome it contacts protein S13 of the 30S subunit (bridge B1b), connecting the 2 subunits; this bridge is implicated in subunit movement. Contacts the P site tRNA; the 5S rRNA and some of its associated proteins might help stabilize positioning of ribosome-bound tRNAs. This Polaromonas naphthalenivorans (strain CJ2) protein is Large ribosomal subunit protein uL5.